The following is a 252-amino-acid chain: Triosephosphate isomerase (252 aa).

Residue 9 to 11 (NWK) participates in substrate binding. Residue histidine 95 is the Electrophile of the active site. Glutamate 167 (proton acceptor) is an active-site residue. Substrate-binding positions include glycine 173, serine 213, and 234 to 235 (GG). Position 213 is a phosphoserine (serine 213).

It belongs to the triosephosphate isomerase family. In terms of assembly, homodimer.

It is found in the cytoplasm. It catalyses the reaction D-glyceraldehyde 3-phosphate = dihydroxyacetone phosphate. Its pathway is carbohydrate biosynthesis; gluconeogenesis. It participates in carbohydrate degradation; glycolysis; D-glyceraldehyde 3-phosphate from glycerone phosphate: step 1/1. Its function is as follows. Involved in the gluconeogenesis. Catalyzes stereospecifically the conversion of dihydroxyacetone phosphate (DHAP) to D-glyceraldehyde-3-phosphate (G3P). This Oceanobacillus iheyensis (strain DSM 14371 / CIP 107618 / JCM 11309 / KCTC 3954 / HTE831) protein is Triosephosphate isomerase.